A 129-amino-acid chain; its full sequence is Small ribosomal subunit protein uS11 (129 aa).

This sequence belongs to the universal ribosomal protein uS11 family. In terms of assembly, part of the 30S ribosomal subunit. Interacts with proteins S7 and S18. Binds to IF-3.

Located on the platform of the 30S subunit, it bridges several disparate RNA helices of the 16S rRNA. Forms part of the Shine-Dalgarno cleft in the 70S ribosome. The protein is Small ribosomal subunit protein uS11 of Brucella abortus (strain S19).